A 396-amino-acid chain; its full sequence is Putative isochorismate synthase (396 aa).

It belongs to the isochorismate synthase family.

The enzyme catalyses chorismate = isochorismate. The protein operates within siderophore biosynthesis; amonabactin biosynthesis. Its function is as follows. Involved in the synthesis of amonabactin, a phenolate siderophore containing 2,3-dihydroxybenzoic acid (2,3-DHB). This chain is Putative isochorismate synthase (amoA), found in Aeromonas hydrophila.